Reading from the N-terminus, the 97-residue chain is MRIFVKAAISTAAWRFYAHPTVAMGICVGTALAYSPENTFELLKNTTYTGIEAAKFAYENTAGIVNGIAGLAHLVYDNLPSYSETPQVDLVGSIEIS.

A signal peptide spans 1–33; the sequence is MRIFVKAAISTAAWRFYAHPTVAMGICVGTALA.

Belongs to the UPF0416 family.

The polypeptide is UPF0416 protein RC0826 (Rickettsia conorii (strain ATCC VR-613 / Malish 7)).